Here is a 328-residue protein sequence, read N- to C-terminus: MSLQNLTRFPRLELIGAPTPLEYLPRLSDHLGREIFIKRDDTTPLAMGGNKLRKLEFLAADALREGADTLITAGAIQSNHVRQTAAVAAKLGLHCVALLENPIGTRAENYLSNGNRLLLDLFNTQVEMCDALTDPAAQLDELATRIEAQGYRPYVIPVGGSNALGALGYVESALEISQQCEDAVAISSVVVASGSAGTHAGLAVGLEQLMPQAELIGVTVSRSVADQLPKVVALQQAVANSLELQAKAEIILWDDYFAPGYGTPNEDGMAAVKLLAQLEGILLDPVYTGKAMAGLIDGITQKRFKDEGPILFVHTGGAPALFAYHPHL.

An N6-(pyridoxal phosphate)lysine modification is found at Lys51.

It belongs to the ACC deaminase/D-cysteine desulfhydrase family. Homodimer. Pyridoxal 5'-phosphate serves as cofactor.

It catalyses the reaction D-cysteine + H2O = hydrogen sulfide + pyruvate + NH4(+) + H(+). Catalyzes the alpha,beta-elimination reaction of D-cysteine and of several D-cysteine derivatives. It could be a defense mechanism against D-cysteine. The chain is D-cysteine desulfhydrase from Klebsiella pneumoniae subsp. pneumoniae (strain ATCC 700721 / MGH 78578).